A 359-amino-acid polypeptide reads, in one-letter code: Aminomethyltransferase (359 aa).

This sequence belongs to the GcvT family. As to quaternary structure, the glycine cleavage system is composed of four proteins: P, T, L and H.

The catalysed reaction is N(6)-[(R)-S(8)-aminomethyldihydrolipoyl]-L-lysyl-[protein] + (6S)-5,6,7,8-tetrahydrofolate = N(6)-[(R)-dihydrolipoyl]-L-lysyl-[protein] + (6R)-5,10-methylene-5,6,7,8-tetrahydrofolate + NH4(+). The glycine cleavage system catalyzes the degradation of glycine. The polypeptide is Aminomethyltransferase (Idiomarina loihiensis (strain ATCC BAA-735 / DSM 15497 / L2-TR)).